Here is a 256-residue protein sequence, read N- to C-terminus: Imidazole glycerol phosphate synthase subunit hisF1 (256 aa).

Active-site residues include D12 and D131.

Belongs to the HisA/HisF family. Heterodimer of HisH and HisF.

It is found in the cytoplasm. The catalysed reaction is 5-[(5-phospho-1-deoxy-D-ribulos-1-ylimino)methylamino]-1-(5-phospho-beta-D-ribosyl)imidazole-4-carboxamide + L-glutamine = D-erythro-1-(imidazol-4-yl)glycerol 3-phosphate + 5-amino-1-(5-phospho-beta-D-ribosyl)imidazole-4-carboxamide + L-glutamate + H(+). It functions in the pathway amino-acid biosynthesis; L-histidine biosynthesis; L-histidine from 5-phospho-alpha-D-ribose 1-diphosphate: step 5/9. Its function is as follows. IGPS catalyzes the conversion of PRFAR and glutamine to IGP, AICAR and glutamate. The HisF subunit catalyzes the cyclization activity that produces IGP and AICAR from PRFAR using the ammonia provided by the HisH subunit. This is Imidazole glycerol phosphate synthase subunit hisF1 (hisF1) from Pseudomonas aeruginosa (strain ATCC 15692 / DSM 22644 / CIP 104116 / JCM 14847 / LMG 12228 / 1C / PRS 101 / PAO1).